Consider the following 98-residue polypeptide: Cytochrome c-552 (98 aa).

The N-terminal stretch at 1–18 (MKKFLLVAVVGLAGITFA) is a signal peptide. Heme c is bound by residues Cys-28, Cys-31, His-32, and Met-77.

Belongs to the cytochrome c family. In terms of processing, binds 1 heme c group covalently per subunit.

Functionally, reacts with hydrogenase. The sequence is that of Cytochrome c-552 from Hydrogenobacter thermophilus (strain DSM 6534 / IAM 12695 / TK-6).